A 367-amino-acid chain; its full sequence is Methylthioribose-1-phosphate isomerase (367 aa).

The active-site Proton donor is D250.

This sequence belongs to the eIF-2B alpha/beta/delta subunits family. MtnA subfamily.

Its subcellular location is the cytoplasm. The protein resides in the nucleus. The enzyme catalyses 5-(methylsulfanyl)-alpha-D-ribose 1-phosphate = 5-(methylsulfanyl)-D-ribulose 1-phosphate. The protein operates within amino-acid biosynthesis; L-methionine biosynthesis via salvage pathway; L-methionine from S-methyl-5-thio-alpha-D-ribose 1-phosphate: step 1/6. Functionally, catalyzes the interconversion of methylthioribose-1-phosphate (MTR-1-P) into methylthioribulose-1-phosphate (MTRu-1-P). This Hordeum vulgare (Barley) protein is Methylthioribose-1-phosphate isomerase (IDI2).